Reading from the N-terminus, the 277-residue chain is Glutamate racemase (277 aa).

Substrate-binding positions include 13–14 and 45–46; these read DS and YG. Cysteine 77 acts as the Proton donor/acceptor in catalysis. 78-79 provides a ligand contact to substrate; that stretch reads NT. The active-site Proton donor/acceptor is the cysteine 192. 193 to 194 is a substrate binding site; it reads TH.

It belongs to the aspartate/glutamate racemases family.

The enzyme catalyses L-glutamate = D-glutamate. Its pathway is cell wall biogenesis; peptidoglycan biosynthesis. Functionally, provides the (R)-glutamate required for cell wall biosynthesis. This chain is Glutamate racemase, found in Rhizobium meliloti (strain 1021) (Ensifer meliloti).